The chain runs to 89 residues: Histone H3.v2 (89 aa).

This sequence belongs to the histone H3 family.

The protein is Histone H3.v2 (H3v2) of Dictyostelium discoideum (Social amoeba).